The chain runs to 94 residues: C-X-C motif chemokine 11 (94 aa).

Positions 1 to 21 are cleaved as a signal peptide; sequence MSVKGMAIALAVILCATVVQG. At Arg-27 the chain carries Citrulline; by PAD2. 2 cysteine pairs are disulfide-bonded: Cys-30/Cys-57 and Cys-32/Cys-74.

Interacts with TNFAIP6 (via Link domain). As to expression, high levels in peripheral blood leukocytes, pancreas and liver astrocytes. Moderate levels in thymus, spleen and lung. Low levels in placenta, prostate and small intestine. Also found in epidermal basal layer keratinocytes in skin disorders.

The protein localises to the secreted. Functionally, chemotactic for interleukin-activated T-cells but not unstimulated T-cells, neutrophils or monocytes. Induces calcium release in activated T-cells. Binds to CXCR3. May play an important role in CNS diseases which involve T-cell recruitment. May play a role in skin immune responses. The chain is C-X-C motif chemokine 11 (CXCL11) from Homo sapiens (Human).